A 100-amino-acid polypeptide reads, in one-letter code: Enhancer of yellow 2 transcription factor (100 aa).

Belongs to the ENY2 family. As to quaternary structure, component of the nuclear pore complex (NPC)-associated AMEX complex (anchoring and mRNA export complex), composed of at least e(y)2 and xmas-2. Component of the SAGA transcription coactivator-HAT complexes, at least composed of Ada2b, e(y)2, Pcaf/Gcn5, Taf10 and Nipped-A/Trrap. Within the SAGA complex, e(y)2, Sgf11, and not/nonstop form an additional subcomplex of SAGA called the DUB module (deubiquitination module). Component of the THO complex, composed of at least e(y)2, HPR1, THO2, THOC5, THOC6 and THOC7. Interacts with e(y)1. Interacts with su(Hw) (via zinc fingers). Interacts with xmas-2; required for localization to the nuclear periphery. Interacts with the nuclear pore complex (NPC).

Its subcellular location is the nucleus. It localises to the nucleoplasm. It is found in the cytoplasm. Functionally, involved in mRNA export coupled transcription activation by association with both the AMEX and the SAGA complexes. The SAGA complex is a multiprotein complex that activates transcription by remodeling chromatin and mediating histone acetylation and deubiquitination. Within the SAGA complex, participates in a subcomplex that specifically deubiquitinates histone H2B. The SAGA complex is recruited to specific gene promoters by activators, where it is required for transcription. Required for nuclear receptor-mediated transactivation. Involved in transcription elongation by recruiting the THO complex onto nascent mRNA. The AMEX complex functions in docking export-competent ribonucleoprotein particles (mRNPs) to the nuclear entrance of the nuclear pore complex (nuclear basket). AMEX participates in mRNA export and accurate chromatin positioning in the nucleus by tethering genes to the nuclear periphery. This Drosophila pseudoobscura pseudoobscura (Fruit fly) protein is Enhancer of yellow 2 transcription factor.